The chain runs to 228 residues: Uracil-DNA glycosylase (228 aa).

The Proton acceptor role is filled by Asp64.

Belongs to the uracil-DNA glycosylase (UDG) superfamily. UNG family.

It localises to the cytoplasm. The catalysed reaction is Hydrolyzes single-stranded DNA or mismatched double-stranded DNA and polynucleotides, releasing free uracil.. Excises uracil residues from the DNA which can arise as a result of misincorporation of dUMP residues by DNA polymerase or due to deamination of cytosine. The protein is Uracil-DNA glycosylase of Yersinia pseudotuberculosis serotype O:1b (strain IP 31758).